The following is a 66-amino-acid chain: Large ribosomal subunit protein bL35 (66 aa).

The segment covering 1–16 has biased composition (basic residues); sequence MPKQKTHRASAKRFKR. The tract at residues 1-20 is disordered; that stretch reads MPKQKTHRASAKRFKRTGSG.

This sequence belongs to the bacterial ribosomal protein bL35 family.

The polypeptide is Large ribosomal subunit protein bL35 (Streptococcus thermophilus (strain CNRZ 1066)).